Here is a 251-residue protein sequence, read N- to C-terminus: E3 ubiquitin-protein ligase MARCHF3 (251 aa).

Residues 61–121 (QSFNDRPMCR…ELCHFRFSVE (61 aa)) form an RING-CH-type zinc finger. The Zn(2+) site is built by Cys-69, Cys-72, Cys-85, Cys-87, His-95, Cys-98, Cys-111, and Cys-114. 2 consecutive transmembrane segments (helical) span residues 143-163 (LFGDMVCFLFITPLATISGWL) and 180-200 (AVGLIALTVALFTIYLFWTLV).

The protein localises to the cytoplasmic vesicle membrane. The protein resides in the early endosome membrane. The catalysed reaction is S-ubiquitinyl-[E2 ubiquitin-conjugating enzyme]-L-cysteine + [acceptor protein]-L-lysine = [E2 ubiquitin-conjugating enzyme]-L-cysteine + N(6)-ubiquitinyl-[acceptor protein]-L-lysine.. It participates in protein modification; protein ubiquitination. In terms of biological role, E3 ubiquitin-protein ligase which may be involved in endosomal trafficking. E3 ubiquitin ligases accept ubiquitin from an E2 ubiquitin-conjugating enzyme in the form of a thioester and then directly transfer the ubiquitin to targeted substrates. In Xenopus tropicalis (Western clawed frog), this protein is E3 ubiquitin-protein ligase MARCHF3 (marchf3).